Here is a 230-residue protein sequence, read N- to C-terminus: Large ribosomal subunit protein uL1 (230 aa).

It belongs to the universal ribosomal protein uL1 family. As to quaternary structure, part of the 50S ribosomal subunit.

In terms of biological role, binds directly to 23S rRNA. The L1 stalk is quite mobile in the ribosome, and is involved in E site tRNA release. Its function is as follows. Protein L1 is also a translational repressor protein, it controls the translation of the L11 operon by binding to its mRNA. This chain is Large ribosomal subunit protein uL1, found in Chromohalobacter salexigens (strain ATCC BAA-138 / DSM 3043 / CIP 106854 / NCIMB 13768 / 1H11).